Here is a 319-residue protein sequence, read N- to C-terminus: tRNA-cytidine(32) 2-sulfurtransferase (319 aa).

Positions 43 to 48 (SGGKDS) match the PP-loop motif motif. Residues cysteine 118, cysteine 121, and cysteine 209 each coordinate [4Fe-4S] cluster. The tract at residues 272–297 (DLAFDSEKMPERFSDGSEEDESEIKI) is disordered. Basic and acidic residues predominate over residues 276 to 286 (DSEKMPERFSD).

The protein belongs to the TtcA family. Homodimer. It depends on Mg(2+) as a cofactor. Requires [4Fe-4S] cluster as cofactor.

It is found in the cytoplasm. It catalyses the reaction cytidine(32) in tRNA + S-sulfanyl-L-cysteinyl-[cysteine desulfurase] + AH2 + ATP = 2-thiocytidine(32) in tRNA + L-cysteinyl-[cysteine desulfurase] + A + AMP + diphosphate + H(+). Its pathway is tRNA modification. Its function is as follows. Catalyzes the ATP-dependent 2-thiolation of cytidine in position 32 of tRNA, to form 2-thiocytidine (s(2)C32). The sulfur atoms are provided by the cysteine/cysteine desulfurase (IscS) system. The polypeptide is tRNA-cytidine(32) 2-sulfurtransferase (Neisseria gonorrhoeae (strain ATCC 700825 / FA 1090)).